The chain runs to 136 residues: Mini-ribonuclease 3 (136 aa).

Asp-20 is an active-site residue.

Belongs to the MrnC RNase family. In terms of assembly, homodimer. Mg(2+) is required as a cofactor.

It is found in the cytoplasm. In terms of biological role, involved in correct processing of both the 5' and 3' ends of 23S rRNA precursor. Processes 30S rRNA precursor transcript even in absence of ribonuclease 3 (Rnc); Rnc processes 30S rRNA into smaller rRNA precursors. This Listeria monocytogenes serovar 1/2a (strain ATCC BAA-679 / EGD-e) protein is Mini-ribonuclease 3.